The primary structure comprises 327 residues: G protein pathway suppressor 2 (327 aa).

A coiled-coil region spans residues 14–109; sequence MARALHRHIM…RRRKEQSDLT (96 aa). A disordered region spans residues 26–65; sequence RERKRQEEEEVDKMMEQKMKEEQERRKKKEMEERMSLEET. Residues K45 and K71 each participate in a glycyl lysine isopeptide (Lys-Gly) (interchain with G-Cter in SUMO1) cross-link. The tract at residues 61-94 is interaction with SUMO; the sequence is SLEETKEQILKLQEKLSALQEEKHQLFLQLKKVL. Disordered regions lie at residues 178 to 208, 253 to 285, and 300 to 327; these read GQFQ…SPSQ, QKQM…APGL, and KSGF…FYHK. Residues 253–271 are compositionally biased toward polar residues; sequence QKQMEHANQQTSFSDSSSL. Asymmetric dimethylarginine is present on R312. A compositionally biased stretch (polar residues) spans 317 to 327; that stretch reads QHSQNPRFYHK. An Asymmetric dimethylarginine; alternate modification is found at R323. R323 carries the omega-N-methylarginine; alternate modification.

As to quaternary structure, component of the N-Cor repressor complex, at least composed of NCOR1, NCOR2, HDAC3, TBL1X, TBL1R, CORO2A and GPS2. Interacts (when sumoylated at Lys-71) with TBL1X; leading to protect GPS2 from degradation by the proteasome. Interacts with UBE2N; leading to inhibit UBE2N/Ubc13 activity. Interacts with TRAF1. Interacts with TRAF2. Interacts with TRAF6. Interacts with PPARG (when in the liganded conformation). Interacts with (sumoylated) NR1H2; interaction with sumoylated NR1H2 and NR5A2 onto hepatic acute phase protein promoters prevents N-Cor corepressor complex dissociation. Interacts with (sumoylated) NR5A2; interaction with sumoylated NR1H2 and NR5A2 onto hepatic acute phase protein promoters prevents N-Cor corepressor complex dissociation. Interacts with NR1H3. Interacts with RFX4. Interacts with ANKRD26. Sumoylation regulates its subcellular location. Sumoylation at Lys-45 and Lys-71 regulates the shuttling between the cytoplasm and the nucleus. Sumoylation at Lys-71 is required for interaction with TBL1X. Sumoylated at Lys-45 and Lys-71 in mitochondrion. Desumoylation by SENP1 leads to relocation from the mitochondria to the nucleus. In terms of processing, ubiquitinated at the C-terminus by SIAH2; leading to its degradation by the proteasome. Interaction with TBL1X and methylation at Arg-323 protect GPS2 against ubiquitination and degradation. Post-translationally, methylated at Arg-312 and Arg-323 by PRMT6. Methylation at Arg-323 protects from degradation by the proteasome.

It is found in the nucleus. It localises to the mitochondrion. The protein resides in the cytoplasm. The protein localises to the cytosol. Functionally, key regulator of inflammation, lipid metabolism and mitochondrion homeostasis that acts by inhibiting the activity of the ubiquitin-conjugating enzyme UBE2N/Ubc13, thereby inhibiting 'Lys-63'-linked ubiquitination. In the nucleus, can both acts as a corepressor and coactivator of transcription, depending on the context. Acts as a transcription coactivator in adipocytes by promoting the recruitment of PPARG to promoters: acts by inhibiting the activity of the ubiquitin-conjugating enzyme UBE2N/Ubc13, leading to stabilization of KDM4A and subsequent histone H3 'Lys-9' (H3K9) demethylation. Promotes cholesterol efflux by acting as a transcription coactivator. Acts as a regulator of B-cell development by inhibiting UBE2N/Ubc13, thereby restricting the activation of Toll-like receptors (TLRs) and B-cell antigen receptors (BCRs) signaling pathways. Acts as a key mediator of mitochondrial stress response: in response to mitochondrial depolarization, relocates from the mitochondria to the nucleus following desumoylation and specifically promotes expression of nuclear-encoded mitochondrial genes. Promotes transcription of nuclear-encoded mitochondrial genes by inhibiting UBE2N/Ubc13. Can also act as a corepressor as part of the N-Cor repressor complex by repressing active PPARG. Plays an anti-inflammatory role in macrophages and is required for insulin sensitivity by acting as a corepressor. Plays an anti-inflammatory role during the hepatic acute phase response by interacting with sumoylated NR1H2 and NR5A2 proteins, thereby preventing N-Cor corepressor complex dissociation. In the cytosol, also plays a non-transcriptional role by regulating insulin signaling and pro-inflammatory pathways. In the cytoplasm, acts as a negative regulator of inflammation by inhibiting the pro-inflammatory TNF-alpha pathway; acts by repressing UBE2N/Ubc13 activity. In the cytoplasm of adipocytes, restricts the activation of insulin signaling via inhibition of UBE2N/Ubc13-mediated ubiquitination of AKT. Able to suppress G-protein- and mitogen-activated protein kinase-mediated signal transduction. This is G protein pathway suppressor 2 from Mus musculus (Mouse).